Here is a 101-residue protein sequence, read N- to C-terminus: MGKHILLLPLGLSLLMSSLLALQCFRCISFDSTGFCYVGRHICQTYPDEICAWVVVTTRDGKFVYGNQSCAECNATTVEHGSLIVSTNCCSATPFCNMVHR.

The first 21 residues, 1–21 (MGKHILLLPLGLSLLMSSLLA), serve as a signal peptide directing secretion. Residues 22 to 99 (LQCFRCISFD…CSATPFCNMV (78 aa)) form the UPAR/Ly6 domain. Intrachain disulfides connect Cys-24/Cys-51, Cys-27/Cys-36, Cys-43/Cys-70, Cys-73/Cys-89, and Cys-90/Cys-96.

It is found in the secreted. The protein is Urinary protein 3 of Rattus norvegicus (Rat).